A 376-amino-acid chain; its full sequence is uncharacterized protein (376 aa).

The next 2 membrane-spanning stretches (helical) occupy residues 153 to 173 (QGTL…VLFA) and 188 to 208 (HRPF…LAVY).

Its subcellular location is the membrane. This is an uncharacterized protein from Saccharomyces cerevisiae (strain ATCC 204508 / S288c) (Baker's yeast).